A 455-amino-acid polypeptide reads, in one-letter code: Ribosomal protein uS12 methylthiotransferase RimO (455 aa).

Residues 1 to 114 (MKYHIVTLGC…INALVGQLER (114 aa)) form the MTTase N-terminal domain. The [4Fe-4S] cluster site is built by C10, C46, C78, C166, C170, and C173. One can recognise a Radical SAM core domain in the interval 152–383 (THQTPSAYLK…MRLQQTISYT (232 aa)). The TRAM domain maps to 386–455 (QRWVGRTIKV…AYDLWGEALS (70 aa)).

Belongs to the methylthiotransferase family. RimO subfamily. The cofactor is [4Fe-4S] cluster.

It localises to the cytoplasm. It catalyses the reaction L-aspartate(89)-[ribosomal protein uS12]-hydrogen + (sulfur carrier)-SH + AH2 + 2 S-adenosyl-L-methionine = 3-methylsulfanyl-L-aspartate(89)-[ribosomal protein uS12]-hydrogen + (sulfur carrier)-H + 5'-deoxyadenosine + L-methionine + A + S-adenosyl-L-homocysteine + 2 H(+). Functionally, catalyzes the methylthiolation of an aspartic acid residue of ribosomal protein uS12. The polypeptide is Ribosomal protein uS12 methylthiotransferase RimO (Chloroflexus aurantiacus (strain ATCC 29366 / DSM 635 / J-10-fl)).